A 388-amino-acid chain; its full sequence is G2/mitotic-specific cyclin-B (388 aa).

The protein belongs to the cyclin family. Cyclin AB subfamily. In terms of assembly, interacts with the CDK1 protein kinase to form a serine/threonine kinase holoenzyme complex also known as maturation promoting factor (MPF). The cyclin subunit imparts substrate specificity to the complex.

Its function is as follows. Essential for the control of the cell cycle at the G2/M (mitosis) transition. This is G2/mitotic-specific cyclin-B from Marthasterias glacialis (Spiny starfish).